Consider the following 695-residue polypeptide: Follicle-stimulating hormone receptor (695 aa).

Residues 1–17 (MTFLLVSLLAFLSLGSG) form the signal peptide. 2 disulfides stabilise this stretch: C18–C25 and C23–C32. Residues 18–46 (CHHRICHCWHRVFLCQESKVTEIPSDLPR) enclose the LRRNT domain. The Extracellular segment spans residues 18–366 (CHHRICHCWH…EDIMGYDILR (349 aa)). LRR repeat units lie at residues 49–72 (VELR…FGDL), 73–97 (EKIE…LSKL), 98–118 (HEIR…AFQN), 119–143 (LPNL…KIQS), 144–169 (LQKV…MGLS), 170–192 (FESM…AFNG), 193–216 (TQLD…VFQG), 217–240 (ASGP…GLEN), and 241–259 (IKKL…PSLD). N-linked (GlcNAc...) asparagine glycosylation is present at N93. N191 and N199 each carry an N-linked (GlcNAc...) asparagine glycan. 4 cysteine pairs are disulfide-bonded: C275–C346, C276–C292, C276–C356, and C292–C338. N-linked (GlcNAc...) asparagine glycosylation is present at N293. Y335 is modified (sulfotyrosine). The chain crosses the membrane as a helical span at residues 367–387 (VLIWFISILAITGNIIVLMIL). Topologically, residues 388–398 (ITSQYKLTVPR) are cytoplasmic. Residues 399-419 (FLMCNLAFADLCIGIYLLLIA) form a helical membrane-spanning segment. The Extracellular portion of the chain corresponds to 420-444 (SVDIYTKSQYHNYAIDWQTGAGCDA). Residues 445–465 (AGFFTVFASELSVYTLTVITL) form a helical membrane-spanning segment. Over 466–487 (ERWHTITHAMQLECKVQLRHAA) the chain is Cytoplasmic. Residues 488 to 508 (IIMLLGWIFAFMVALFPIFGI) form a helical membrane-spanning segment. Residues 509–528 (SSYMKVSICLPMDIDSPLSQ) are Extracellular-facing. The helical transmembrane segment at 529–550 (LYVMSLLVLNVLAFVVICCCYA) threads the bilayer. The Cytoplasmic segment spans residues 551–573 (HIYLTVRNPNIVSSSSDTKIAKR). The helical transmembrane segment at 574-594 (MAMLIFTDFLCMAPISFFAIS) threads the bilayer. Residues 595–608 (ASLKVPLITVSKSK) are Extracellular-facing. The chain crosses the membrane as a helical span at residues 609–629 (ILLVLFYPINSCANPFLYAIF). At 630–695 (TKNFRRDFFI…LIPLRHLAKN (66 aa)) the chain is on the cytoplasmic side.

Belongs to the G-protein coupled receptor 1 family. FSH/LSH/TSH subfamily. Homotrimer. Functions as a homotrimer binding the FSH hormone heterodimer composed of CGA and FSHB. Interacts with ARRB2. Interacts with APPL2; interaction is independent of follicle stimulating hormone stimulation. In terms of processing, N-glycosylated; indirectly required for FSH-binding, possibly via a conformational change that allows high affinity binding of hormone. Sulfated.

It localises to the cell membrane. Functionally, g protein-coupled receptor for follitropin, the follicle-stimulating hormone. Through cAMP production activates the downstream PI3K-AKT and ERK1/ERK2 signaling pathways. The protein is Follicle-stimulating hormone receptor (FSHR) of Felis catus (Cat).